A 111-amino-acid chain; its full sequence is Putative membrane protein insertion efficiency factor (111 aa).

The protein belongs to the UPF0161 family.

It localises to the cell inner membrane. In terms of biological role, could be involved in insertion of integral membrane proteins into the membrane. The chain is Putative membrane protein insertion efficiency factor from Methylobacterium nodulans (strain LMG 21967 / CNCM I-2342 / ORS 2060).